We begin with the raw amino-acid sequence, 502 residues long: Reduced meiotic recombination protein C1442.04c (502 aa).

3 positions are modified to phosphoserine: serine 328, serine 330, and serine 331. Disordered regions lie at residues 353–391 (NDLN…LRDN), 420–440 (GSLN…ENVD), and 454–502 (ESAF…PSDD). Positions 367–378 (DGSEIITLDEND) are enriched in acidic residues. Polar residues-rich tracts occupy residues 420 to 436 (GSLN…TNDG) and 462 to 477 (GTIN…TTDT).

This sequence belongs to the RMR1 family.

It is found in the cytoplasm. The protein localises to the nucleus. Its function is as follows. Required for normal levels of gene conversion events during meiosis. The sequence is that of Reduced meiotic recombination protein C1442.04c from Schizosaccharomyces pombe (strain 972 / ATCC 24843) (Fission yeast).